Consider the following 1177-residue polypeptide: Topoisomerase 1-associated factor 1 (1177 aa).

4 disordered regions span residues 575 to 597 (AKQAKQADIEGDDEEQASEEEDL), 791 to 815 (REAWESQEQHSEGQKAPNPMIPVKS), 874 to 1001 (LTEP…ADQE), and 1021 to 1177 (LLHG…SDSE). A compositionally biased stretch (acidic residues) spans 583 to 597 (IEGDDEEQASEEEDL). Positions 791-803 (REAWESQEQHSEG) are enriched in basic and acidic residues. Composition is skewed to acidic residues over residues 911-921 (FGSDSEGDDNV) and 954-963 (EEEEPDEEDL). Over residues 981–991 (IKSDLYIHASD) the composition is skewed to basic and acidic residues. The segment covering 1086-1096 (SLGQGSPSLQG) has biased composition (polar residues). Composition is skewed to acidic residues over residues 1108–1118 (EENELDFDDDL) and 1146–1155 (TIDEDDDDEA).

This sequence belongs to the timeless family. As to quaternary structure, component of the fork protection complex (FPC) consisting of tof1 and csm3.

It localises to the nucleus. In terms of biological role, forms a fork protection complex (FPC) with csm3 and which is required for chromosome segregation during meiosis and DNA damage repair. FPC coordinates leading and lagging strand synthesis and moves with the replication fork. FPC stabilizes replication forks in a configuration that is recognized by replication checkpoint sensors. The chain is Topoisomerase 1-associated factor 1 (tof1) from Neosartorya fischeri (strain ATCC 1020 / DSM 3700 / CBS 544.65 / FGSC A1164 / JCM 1740 / NRRL 181 / WB 181) (Aspergillus fischerianus).